A 374-amino-acid chain; its full sequence is Serpin B8 (374 aa).

It belongs to the serpin family. Ov-serpin subfamily.

It is found in the cytoplasm. Functionally, has an important role in epithelial desmosome-mediated cell-cell adhesion. This chain is Serpin B8 (SERPINB8), found in Homo sapiens (Human).